We begin with the raw amino-acid sequence, 91 residues long: Soluble cytochrome b558 (91 aa).

The region spanning 8 to 88 is the Cytochrome b5 heme-binding domain; sequence LPVFTLEQVA…LQRYLIGTLE (81 aa). Residues C25 and C54 are joined by a disulfide bond. Positions 43 and 71 each coordinate heme.

In Ectothiorhodospira shaposhnikovii (Ectothiorhodospira vacuolata), this protein is Soluble cytochrome b558.